The primary structure comprises 251 residues: Gamma-interferon-inducible lysosomal thiol reductase (251 aa).

An N-terminal signal peptide occupies residues 1-21; it reads MFGFRLSVLLFAVCSLSACSC. The region spanning 22–60 is the Saposin A-type domain; it reads MFVNSCKYPPSQWCDSRDIAAQCGVLEQCMKFNASPVTV. Cys-68 and Cys-71 are oxidised to a cystine. Asn-108 is a glycosylation site (N-linked (GlcNAc...) asparagine).

It belongs to the GILT family. As to quaternary structure, dimer; disulfide-linked. As to expression, highly expressed in spleen and kidney. Also detected at lower levels in liver, heart, brain, intestine and gill.

Its subcellular location is the secreted. The protein localises to the lysosome. Functionally, lysosomal thiol reductase that can reduce protein disulfide bonds. May facilitate the complete unfolding of proteins destined for lysosomal degradation. Plays an important role in antigen processing. The chain is Gamma-interferon-inducible lysosomal thiol reductase from Carassius auratus (Goldfish).